Here is a 149-residue protein sequence, read N- to C-terminus: Large ribosomal subunit protein bL9 (149 aa).

Belongs to the bacterial ribosomal protein bL9 family.

Functionally, binds to the 23S rRNA. The polypeptide is Large ribosomal subunit protein bL9 (Thermotoga petrophila (strain ATCC BAA-488 / DSM 13995 / JCM 10881 / RKU-1)).